A 131-amino-acid polypeptide reads, in one-letter code: Protein ApaG (131 aa).

The ApaG domain maps to 3 to 127 (RAVTRQIEVT…FSLDSPDGGK (125 aa)).

The chain is Protein ApaG from Bradyrhizobium sp. (strain BTAi1 / ATCC BAA-1182).